Consider the following 151-residue polypeptide: FAD synthase (151 aa).

ATP contacts are provided by residues 9–10 (TF), 14–17 (HPGH), Asp-96, and Tyr-123.

Belongs to the archaeal FAD synthase family. In terms of assembly, homodimer. The cofactor is a divalent metal cation.

It catalyses the reaction FMN + ATP + H(+) = FAD + diphosphate. It functions in the pathway cofactor biosynthesis; FAD biosynthesis; FAD from FMN: step 1/1. In terms of biological role, catalyzes the transfer of the AMP portion of ATP to flavin mononucleotide (FMN) to produce flavin adenine dinucleotide (FAD) coenzyme. The polypeptide is FAD synthase (Methanothermobacter thermautotrophicus (strain ATCC 29096 / DSM 1053 / JCM 10044 / NBRC 100330 / Delta H) (Methanobacterium thermoautotrophicum)).